Reading from the N-terminus, the 108-residue chain is Ig kappa chain V-V region HP R16.7 (108 aa).

The interval 1–23 is framework-1; the sequence is DIQMTQTTSSLSASLGDRVTISC. A disulfide bridge connects residues cysteine 23 and cysteine 88. Residues 24 to 34 form a complementarity-determining-1 region; the sequence is RASQDISNYLN. A framework-2 region spans residues 35–49; the sequence is WYQQKPDGTVKLLIY. Residues 50–56 form a complementarity-determining-2 region; it reads YTSRLHS. The segment at 57 to 88 is framework-3; the sequence is GVPSRFSGSGSGTDYSLTISNLEQEDIATYFC. Positions 89 to 97 are complementarity-determining-3; it reads QQGNSLPRT. Residues 98–108 form a framework-4 region; it reads FGGGTKLEIKR.

The sequence is that of Ig kappa chain V-V region HP R16.7 from Mus musculus (Mouse).